A 226-amino-acid chain; its full sequence is Ribonuclease 3 (226 aa).

The region spanning 6-128 (INRLQRKLGY…LIGGVFLDSD (123 aa)) is the RNase III domain. Glutamate 41 serves as a coordination point for Mg(2+). Aspartate 45 is a catalytic residue. Positions 114 and 117 each coordinate Mg(2+). The active site involves glutamate 117. A DRBM domain is found at 155-225 (DPKTRLQEYL…AEQALKMLEL (71 aa)).

It belongs to the ribonuclease III family. Homodimer. Mg(2+) is required as a cofactor.

It localises to the cytoplasm. The catalysed reaction is Endonucleolytic cleavage to 5'-phosphomonoester.. In terms of biological role, digests double-stranded RNA. Involved in the processing of primary rRNA transcript to yield the immediate precursors to the large and small rRNAs (23S and 16S). Processes some mRNAs, and tRNAs when they are encoded in the rRNA operon. Processes pre-crRNA and tracrRNA of type II CRISPR loci if present in the organism. This is Ribonuclease 3 from Enterobacter sp. (strain 638).